An 87-amino-acid polypeptide reads, in one-letter code: Cytochrome c6 (87 aa).

4 residues coordinate heme c: cysteine 10, cysteine 13, histidine 14, and methionine 56.

Belongs to the cytochrome c family. PetJ subfamily. As to quaternary structure, monomer. Post-translationally, binds 1 heme c group covalently per subunit.

The protein resides in the plastid. It is found in the chloroplast thylakoid lumen. In terms of biological role, functions as an electron carrier between membrane-bound cytochrome b6-f and photosystem I in oxygenic photosynthesis. The protein is Cytochrome c6 (petJ) of Euglena viridis (Cercaria viridis).